The following is a 395-amino-acid chain: tRNA-specific 2-thiouridylase MnmA (395 aa).

Residues 7–14 and Met33 each bind ATP; that span reads GLSGGVDS. Residues 95–97 are interaction with target base in tRNA; that stretch reads NPD. Cys100 functions as the Nucleophile in the catalytic mechanism. Cys100 and Cys200 are joined by a disulfide. Gly124 contacts ATP. The segment at 150–152 is interaction with tRNA; the sequence is KDQ. Cys200 acts as the Cysteine persulfide intermediate in catalysis. The interaction with tRNA stretch occupies residues 346–347; the sequence is RY.

Belongs to the MnmA/TRMU family.

It localises to the cytoplasm. The enzyme catalyses S-sulfanyl-L-cysteinyl-[protein] + uridine(34) in tRNA + AH2 + ATP = 2-thiouridine(34) in tRNA + L-cysteinyl-[protein] + A + AMP + diphosphate + H(+). Functionally, catalyzes the 2-thiolation of uridine at the wobble position (U34) of tRNA, leading to the formation of s(2)U34. This chain is tRNA-specific 2-thiouridylase MnmA, found in Christiangramia forsetii (strain DSM 17595 / CGMCC 1.15422 / KT0803) (Gramella forsetii).